The primary structure comprises 745 residues: Junction plakoglobin (745 aa).

Met-1 carries the N-acetylmethionine modification. Thr-14 carries O-linked (GlcNAc) threonine glycosylation. Phosphoserine is present on residues Ser-99 and Ser-125. ARM repeat units lie at residues 132–171 (NYQD…QLSK), 172–215 (KEAS…LSHH), 216–255 (REGL…NLLL), 258–297 (EGAK…LLAY), 298–341 (GNQE…LSVC), 342–381 (PSNK…NLSD), 383–420 (ATKQ…NLTC), 423–464 (SKNK…HLTS), 470–510 (EMAQ…NLAL), 512–551 (PANH…QPYT), 574–613 (PMNR…ELAQ), and 615–661 (KEAA…PDYR). The segment at 132-297 (NYQDDAELAT…TTDCLQLLAY (166 aa)) is interaction with DSC1 and DSG1. The residue at position 182 (Ser-182) is a Phosphoserine. The segment at 574-661 (PMNRMEIFRL…ISEDKNPDYR (88 aa)) is interaction with DSC1. Phosphoserine is present on residues Ser-665 and Ser-730.

It belongs to the beta-catenin family. In terms of assembly, homodimer. Component of an E-cadherin/catenin adhesion complex composed of at least E-cadherin/CDH1 and gamma-catenin/JUP, and possibly alpha-catenin/CTNNA1; the complex is located to adherens junctions. The stable association of CTNNA1 is controversial as CTNNA1 was shown not to bind to F-actin when assembled in the complex. Interacts with MUC1. Interacts with CAV1. Interacts with PTPRJ. Interacts with DSG1. Interacts with DSC1 and DSC2. Interacts with PKP2. Interacts with PKP3 (via N-terminus); the interaction is required for PKP3 localization to desmosome cell-cell junctions. Interacts with DSG4. Post-translationally, may be phosphorylated by FER.

It localises to the cell junction. It is found in the adherens junction. Its subcellular location is the desmosome. The protein localises to the cytoplasm. The protein resides in the cytoskeleton. It localises to the cell membrane. It is found in the nucleus. In terms of biological role, common junctional plaque protein. The membrane-associated plaques are architectural elements in an important strategic position to influence the arrangement and function of both the cytoskeleton and the cells within the tissue. The presence of plakoglobin in both the desmosomes and in the intermediate junctions suggests that it plays a central role in the structure and function of submembranous plaques. Acts as a substrate for VE-PTP and is required by it to stimulate VE-cadherin function in endothelial cells. Can replace beta-catenin in E-cadherin/catenin adhesion complexes which are proposed to couple cadherins to the actin cytoskeleton. This chain is Junction plakoglobin, found in Bos taurus (Bovine).